The sequence spans 566 residues: Probable F-box protein At5g39490 (566 aa).

Residues 8–54 (ACLLLMLPEDIFVVISRFLSPSDICNLILCGKSLRALVDSEKTWLVQ) enclose the F-box domain. Residues 318 to 338 (LRKSSSSKNTTPSQSEIRHSN) are disordered. Positions 320-332 (KSSSSKNTTPSQS) are enriched in low complexity.

In Arabidopsis thaliana (Mouse-ear cress), this protein is Probable F-box protein At5g39490.